Here is a 471-residue protein sequence, read N- to C-terminus: Mannose-1-phosphate guanylyltransferase (471 aa).

Belongs to the mannose-6-phosphate isomerase type 2 family.

The catalysed reaction is alpha-D-mannose 1-phosphate + GTP + H(+) = GDP-alpha-D-mannose + diphosphate. Its pathway is nucleotide-sugar biosynthesis; GDP-alpha-D-mannose biosynthesis; GDP-alpha-D-mannose from alpha-D-mannose 1-phosphate (GTP route): step 1/1. Its function is as follows. Involved in GDP-mannose biosynthesis which serves as the activated sugar nucleotide precursor for mannose residues in cell surface polysaccharides. This enzyme participates in synthesis of the LPS O antigen. The sequence is that of Mannose-1-phosphate guanylyltransferase (manC) from Salmonella montevideo.